The chain runs to 72 residues: ATP synthase subunit c (72 aa).

2 consecutive transmembrane segments (helical) span residues 1-21 (MSLG…GAGI) and 49-69 (FIGV…AFIV).

This sequence belongs to the ATPase C chain family. In terms of assembly, F-type ATPases have 2 components, F(1) - the catalytic core - and F(0) - the membrane proton channel. F(1) has five subunits: alpha(3), beta(3), gamma(1), delta(1), epsilon(1). F(0) has three main subunits: a(1), b(2) and c(10-14). The alpha and beta chains form an alternating ring which encloses part of the gamma chain. F(1) is attached to F(0) by a central stalk formed by the gamma and epsilon chains, while a peripheral stalk is formed by the delta and b chains.

The protein localises to the cell membrane. In terms of biological role, f(1)F(0) ATP synthase produces ATP from ADP in the presence of a proton or sodium gradient. F-type ATPases consist of two structural domains, F(1) containing the extramembraneous catalytic core and F(0) containing the membrane proton channel, linked together by a central stalk and a peripheral stalk. During catalysis, ATP synthesis in the catalytic domain of F(1) is coupled via a rotary mechanism of the central stalk subunits to proton translocation. Functionally, key component of the F(0) channel; it plays a direct role in translocation across the membrane. A homomeric c-ring of between 10-14 subunits forms the central stalk rotor element with the F(1) delta and epsilon subunits. This chain is ATP synthase subunit c, found in Bacillus cytotoxicus (strain DSM 22905 / CIP 110041 / 391-98 / NVH 391-98).